Here is a 416-residue protein sequence, read N- to C-terminus: Choline/ethanolaminephosphotransferase 1 (416 aa).

The segment at 1-20 is disordered; that stretch reads MSGHRSTRKRCGDSHPESPV. Ser-18 bears the Phosphoserine mark. Thr-40 carries the phosphothreonine modification. Asn-86 contacts CDP-choline. 2 consecutive transmembrane segments (helical) span residues 89–108 and 116–133; these read TIIGLSINICTTILLVFYCP and LWAYIACACGLFIYQSLD. Residue Asp-133 participates in Mg(2+) binding. A glycan (N-linked (GlcNAc...) asparagine) is linked at Asn-144. CDP-choline is bound at residue Glu-151. Residue Asp-154 participates in Mg(2+) binding. His-155 (proton acceptor) is an active-site residue. 8 helical membrane-spanning segments follow: residues 156-176, 180-199, 210-230, 246-267, 286-306, 315-334, 349-363, and 368-388; these read GCDSLSTVFVVLGTCIAVQLG, DWMFFCCFAGTFMFYCAHWQ, IIDVTEVQIFIIIMHLLAVIG, MKLLPALCTVAGTIFSCTNYFR, VLSPFLHIGSVITLAVMIYKK, HPCLYILTFGFVSAKITNKL, TAFIGPALLFLDQYF, and DEYIVLWIALIFSFFDLIRYC. Asp-158 lines the Mg(2+) pocket.

Belongs to the CDP-alcohol phosphatidyltransferase class-I family. As to quaternary structure, homodimer. The cofactor is Mg(2+). It depends on Mn(2+) as a cofactor.

The protein localises to the endoplasmic reticulum membrane. It localises to the nucleus membrane. It carries out the reaction CDP-ethanolamine + a 1,2-diacyl-sn-glycerol = a 1,2-diacyl-sn-glycero-3-phosphoethanolamine + CMP + H(+). The catalysed reaction is CDP-choline + a 1,2-diacyl-sn-glycerol = a 1,2-diacyl-sn-glycero-3-phosphocholine + CMP + H(+). It catalyses the reaction 1-O-alkyl-2-acyl-sn-glycerol + CDP-choline = a 1-O-alkyl-2-acyl-sn-glycero-3-phosphocholine + CMP + H(+). The enzyme catalyses a 1-O-(1Z-alkenyl)-2-acyl-sn-glycerol + CDP-choline = a 1-O-(1Z-alkenyl)-2-acyl-sn-glycero-3-phosphocholine + CMP + H(+). It carries out the reaction 1,2-dioctanoyl-sn-glycerol + CDP-choline = 1,2-dioctanoyl-sn-glycero-3-phosphocholine + CMP + H(+). The catalysed reaction is 1,2-didecanoyl-sn-glycerol + CDP-choline = 1,2-didecanoyl-sn-glycero-3-phosphocholine + CMP + H(+). It catalyses the reaction CDP-choline + 1,2-di-(9Z-octadecenoyl)-sn-glycerol = 1,2-di-(9Z-octadecenoyl)-sn-glycero-3-phosphocholine + CMP + H(+). The enzyme catalyses 1-hexadecanoyl-2-(9Z-octadecenoyl)-sn-glycerol + CDP-choline = 1-hexadecanoyl-2-(9Z-octadecenoyl)-sn-glycero-3-phosphocholine + CMP + H(+). It carries out the reaction CDP-ethanolamine + 1,2-di-(9Z-octadecenoyl)-sn-glycerol = 1,2-di-(9Z-octadecenoyl)-sn-glycero-3-phosphoethanolamine + CMP + H(+). The catalysed reaction is 1-hexadecanoyl-2-(9Z-octadecenoyl)-sn-glycerol + CDP-ethanolamine = 1-hexadecanoyl-2-(9Z-octadecenoyl)-sn-glycero-3-phosphoethanolamine + CMP + H(+). It catalyses the reaction 1-hexadecanoyl-2-(4Z,7Z,10Z,13Z,16Z,19Z-docosahexaenoyl)-sn-glycerol + CDP-choline = 1-hexadecanoyl-2-(4Z,7Z,10Z,13Z,16Z,19Z-docosahexaenoyl)-sn-glycero-3-phosphocholine + CMP + H(+). The enzyme catalyses 1,2-di-(9Z-hexadecenoyl)-sn-glycerol + CDP-choline = 1,2-di-(9Z-hexadecenoyl)-sn-glycero-3-phosphocholine + CMP + H(+). It carries out the reaction 1,2-di-(9Z-hexadecenoyl)-sn-glycerol + CDP-ethanolamine = 1,2-di-(9Z-hexadecenoyl)-sn-glycero-3-phosphoethanolamine + CMP + H(+). The catalysed reaction is 1-O-hexadecyl-2-acetyl-sn-glycerol + CDP-choline = 1-O-hexadecyl-2-acetyl-sn-glycero-3-phosphocholine + CMP + H(+). It catalyses the reaction 1-O-hexadecyl-2-(5Z,8Z,11Z,14Z-eicosatetraenoyl)-sn-glycerol + CDP-choline = 1-O-hexadecyl-2-(5Z,8Z,11Z,14Z)-eicosatetraenoyl-sn-glycero-3-phosphocholine + CMP + H(+). Its pathway is phospholipid metabolism; phosphatidylethanolamine biosynthesis; phosphatidylethanolamine from ethanolamine: step 3/3. The protein operates within phospholipid metabolism; phosphatidylcholine biosynthesis; phosphatidylcholine from phosphocholine: step 2/2. In terms of biological role, catalyzes both phosphatidylcholine and phosphatidylethanolamine biosynthesis from CDP-choline and CDP-ethanolamine, respectively. Involved in protein-dependent process of phospholipid transport to distribute phosphatidyl choline to the lumenal surface. Has a higher cholinephosphotransferase activity than ethanolaminephosphotransferase activity. The protein is Choline/ethanolaminephosphotransferase 1 of Mus musculus (Mouse).